Consider the following 162-residue polypeptide: uncharacterized protein (162 aa).

The first 21 residues, 1–21 (MRLCGLLIFLSYIVYVDNAVT), serve as a signal peptide directing secretion.

This is an uncharacterized protein from Caenorhabditis elegans.